We begin with the raw amino-acid sequence, 271 residues long: N-acetyltransferase ECO1 (271 aa).

A disordered region spans residues 1-38 (MKTYRAKRKYLSESEDDVFSSSPTQSPETSPLQPPNES). The span at 20–31 (SSSPTQSPETSP) shows a compositional bias: low complexity. Residues 80–104 (TTCKTCGMTYQVAYGPDISAHKSFH) form a CCHH-type zinc finger.

Belongs to the acetyltransferase family. ECO subfamily.

It is found in the nucleus. Its function is as follows. Probable acetyltransferase required for the establishment of sister chromatid cohesion and couple the processes of cohesion and DNA replication to ensure that only sister chromatids become paired together. In contrast to the structural cohesins, the deposition and establishment factors are required only during S phase. Acts by acetylating the cohesin complex component SMC3. The sequence is that of N-acetyltransferase ECO1 (ECO1) from Yarrowia lipolytica (strain CLIB 122 / E 150) (Yeast).